The following is a 175-amino-acid chain: Ribosome maturation factor RimM (175 aa).

The PRC barrel domain maps to 98–175 (EGEYYWYQLE…EMRVDWDADF (78 aa)).

The protein belongs to the RimM family. As to quaternary structure, binds ribosomal protein uS19.

The protein localises to the cytoplasm. Functionally, an accessory protein needed during the final step in the assembly of 30S ribosomal subunit, possibly for assembly of the head region. Essential for efficient processing of 16S rRNA. May be needed both before and after RbfA during the maturation of 16S rRNA. It has affinity for free ribosomal 30S subunits but not for 70S ribosomes. In Pseudomonas paraeruginosa (strain DSM 24068 / PA7) (Pseudomonas aeruginosa (strain PA7)), this protein is Ribosome maturation factor RimM.